The primary structure comprises 41 residues: Photosystem I reaction center subunit IX (41 aa).

A helical transmembrane segment spans residues 7–27 (YLSVAPVLSTLWFGALAGLLI).

This sequence belongs to the PsaJ family.

The protein resides in the plastid. Its subcellular location is the chloroplast thylakoid membrane. In terms of biological role, may help in the organization of the PsaE and PsaF subunits. This chain is Photosystem I reaction center subunit IX, found in Jasminum nudiflorum (Winter jasmine).